Reading from the N-terminus, the 538-residue chain is Calcium-dependent protein kinase 32 (538 aa).

Residues 1-37 form a disordered region; it reads MGNCCGTAGSLAQNDNKPKKGRKKQNPFSIDYGLHHG. Gly-2 carries N-myristoyl glycine lipidation. The region spanning 63–321 is the Protein kinase domain; it reads YTLGRELGRG…AQQVLDHPWL (259 aa). Residues 69-77 and Lys-92 contribute to the ATP site; that span reads LGRGEFGVT. Asp-187 (proton acceptor) is an active-site residue. Ser-227 bears the Phosphoserine mark. Positions 327–357 are autoinhibitory domain; it reads APNVSLGETVRARLKQFTVMNKLKKRALRVI. 4 EF-hand domains span residues 364–399, 400–435, 436–470, and 471–506; these read EEASGIREGFQIMDTSQRGKINIDELKIGLQKLGHA, IPQDDLQILMDAGDIDRDGYLDCDEFIAISVHLRKM, GNDEHLKKAFAFFDQNNNGYIEIEELREALSDELG, and TSEEVVDAIIRDVDTDKDGRISYEEFVTMMKTGTDW. Ca(2+) is bound by residues Asp-377, Ser-379, Lys-383, Glu-388, Asp-413, Asp-415, Asp-417, Tyr-419, Glu-424, Asp-449, Asn-451, Asn-453, Tyr-455, Glu-460, Asp-484, Asp-486, Asp-488, and Arg-490. Ser-492 carries the post-translational modification Phosphoserine. Glu-495 is a binding site for Ca(2+).

It belongs to the protein kinase superfamily. Ser/Thr protein kinase family. CDPK subfamily. In terms of assembly, interacts with ABF4. Interacts with CNGC18. Expressed in embryos and most of the vegetative tissues.

The protein localises to the nucleus. It is found in the membrane. It catalyses the reaction L-seryl-[protein] + ATP = O-phospho-L-seryl-[protein] + ADP + H(+). The enzyme catalyses L-threonyl-[protein] + ATP = O-phospho-L-threonyl-[protein] + ADP + H(+). With respect to regulation, activated by calcium. Autophosphorylation may play an important role in the regulation of the kinase activity. Its function is as follows. May play a role in signal transduction pathways that involve calcium as a second messenger. Involved in maintaining Ca2+ homeostasis in pollen tube tips by regulating CNGC18. Functions as regulator of the calcium-mediated abscisic acid (ABA) signaling pathway. Phosphorylates ABA-responsive transcription factor ABF4 in vitro. The chain is Calcium-dependent protein kinase 32 from Arabidopsis thaliana (Mouse-ear cress).